The chain runs to 472 residues: Citrate synthase, mitochondrial (472 aa).

Active-site residues include His308, His354, and Asp409.

This sequence belongs to the citrate synthase family. In terms of assembly, homodimer.

It localises to the mitochondrion matrix. The enzyme catalyses oxaloacetate + acetyl-CoA + H2O = citrate + CoA + H(+). Its pathway is carbohydrate metabolism; tricarboxylic acid cycle; isocitrate from oxaloacetate: step 1/2. This chain is Citrate synthase, mitochondrial (CS), found in Daucus carota (Wild carrot).